Here is a 330-residue protein sequence, read N- to C-terminus: Src kinase-associated phosphoprotein 2-A (330 aa).

The interval 53–77 (QDFQDKAETDDQEENDGFSLPPDAV) is disordered. In terms of domain architecture, PH spans 105-208 (DYLRAGYLEK…WINVIMNARG (104 aa)). The segment at 228–261 (SHEEDIYEELPEESEKPVTGSETPKATPVPVNNT) is disordered. Residues 247–261 (GSETPKATPVPVNNT) are compositionally biased toward polar residues. The SH3 domain occupies 268 to 329 (DYANFYRGLW…PKAYIIEMYD (62 aa)).

The protein belongs to the SKAP family. Post-translationally, phosphorylated on tyrosines.

The protein localises to the cytoplasm. Its function is as follows. May be involved in B-cell and macrophage adhesion processes. May play a role in src signaling pathway. The protein is Src kinase-associated phosphoprotein 2-A (skap2-a) of Xenopus laevis (African clawed frog).